Here is a 397-residue protein sequence, read N- to C-terminus: uncharacterized protein (397 aa).

Cys-47, Cys-53, Cys-56, and Cys-131 together coordinate [4Fe-4S] cluster. Gln-235, Phe-262, Glu-282, and Asp-328 together coordinate S-adenosyl-L-methionine. Cys-354 (nucleophile) is an active-site residue.

The protein belongs to the class I-like SAM-binding methyltransferase superfamily. RNA M5U methyltransferase family.

This is an uncharacterized protein from Zymomonas mobilis subsp. mobilis (strain ATCC 31821 / ZM4 / CP4).